Here is a 97-residue protein sequence, read N- to C-terminus: Lipolysis-activating peptide 1-alpha chain (97 aa).

Residues 1–21 (MNITLFCSVFILISLAGLSVS) form the signal peptide. The region spanning 25 to 88 (PGNYPMSLYG…FWAAHKNHCK (64 aa)) is the LCN-type CS-alpha/beta domain. 3 cysteine pairs are disulfide-bonded: Cys-39-Cys-62, Cys-48-Cys-67, and Cys-52-Cys-69.

Belongs to the long (3 C-C) scorpion toxin superfamily. As to quaternary structure, monomer (edited version) and heterodimer (non-edited version) of this alpha chain and a beta chain (AC D9U2A2). Expressed by the venom gland.

Its subcellular location is the secreted. Its function is as follows. The heterodimer non-edited LVP1 induces lipolysis in rat adipocytes. Induction of lipolysis by LVP1 appears to be mediated through the beta-2 adrenergic receptor pathway (ADRB2). Functionally, the edited BmKBTx-like, similar to beta-toxins, may modulate voltage-gated sodium channels (Nav) and may block voltage-gated potassium channels (Kv). The polypeptide is Lipolysis-activating peptide 1-alpha chain (Lychas mucronatus (Chinese swimming scorpion)).